The following is a 150-amino-acid chain: Arginine repressor (150 aa).

This sequence belongs to the ArgR family.

Its subcellular location is the cytoplasm. It participates in amino-acid biosynthesis; L-arginine biosynthesis [regulation]. Functionally, regulates arginine biosynthesis genes. The protein is Arginine repressor of Staphylococcus aureus (strain Mu3 / ATCC 700698).